Here is an 862-residue protein sequence, read N- to C-terminus: uncharacterized protein (862 aa).

The signal sequence occupies residues 1–25 (MKPRPYSVFLFLHIVFYSLLSAVNG). Residues 26 to 61 (SPSLDYFETCSNFVPRAGIPTFSPYAVIKNFDEVNR) lie on the Lumenal side of the membrane. The chain crosses the membrane as a helical span at residues 62 to 82 (MYYIQVVGNLSGVITIVGGNG). At 83-187 (SHIHAASVYS…STTLYYFYPV (105 aa)) the chain is on the cytoplasmic side. The helical transmembrane segment at 188-208 (ISYLVVVSLAYVSFSIIYALF) threads the bilayer. At 209 to 230 (LNPWTGSLDPFKSIFNFNMDPD) the chain is on the lumenal side. A helical membrane pass occupies residues 231–250 (ALRLTSLGFFDFVQYLQFAV). At 251–256 (STAQVS) the chain is on the cytoplasmic side. A helical membrane pass occupies residues 257–277 (VMFPKFYINIMAALSWGTALF). Residues 278-329 (RFPIFSEPAEYQFADFADLSVASSSYADYLPKSYGMYSFLDSIGIGTACWLP) lie on the Lumenal side of the membrane. A helical transmembrane segment spans residues 330 to 350 (FLIVMVIYLFAALFVALLVIF). Over 351-372 (LKWLMSRIFNETIAETRWDTWS) the chain is Cytoplasmic. Residues 373 to 393 (FIAGSLIRLYFLTYFPTVAYM) form a helical membrane-spanning segment. Residues 394–404 (SFQFVAPPTGY) are Lumenal-facing. Residues 405–425 (EIIPVLWFIFFGIFIPVYLYM) form a helical membrane-spanning segment. Topologically, residues 426 to 457 (NLAFVEPSSKLLEDQTYLHLFGSIYNSFREER) are cytoplasmic. Residues 458-480 (VMFWIFPIAVQFMRGITVGVIGS) form a helical membrane-spanning segment. Residues 481 to 483 (SGS) lie on the Lumenal side of the membrane. A helical transmembrane segment spans residues 484–503 (AQLAIFFILEVANVVAYAYV). At 504 to 514 (RPHFPQTSMNT) the chain is on the cytoplasmic side. Residues 515-535 (LNTFISTMRLITVILMIPLDP) form a helical membrane-spanning segment. The Lumenal portion of the chain corresponds to 536 to 545 (RLKVLGISRD). A helical transmembrane segment spans residues 546–566 (LLAYAILFIHIMVCILFLLLS). Residues 567-862 (TQRFMEVSAR…AESAWSIPHP (296 aa)) lie on the Cytoplasmic side of the membrane. Residues 668-686 (QASSLVPSKNNTASSSSLM) are compositionally biased toward polar residues. Disordered stretches follow at residues 668 to 717 (QASS…SVRK) and 815 to 862 (VLRS…IPHP). Residues 689 to 700 (SPVTPSSPYSTS) show a composition bias toward low complexity. Residues 834–850 (EPSRDEQYSMERKKTDD) are compositionally biased toward basic and acidic residues.

This sequence belongs to the transient receptor potential (TRP) ion channel family.

Its subcellular location is the cytoplasm. It localises to the golgi apparatus membrane. This is an uncharacterized protein from Schizosaccharomyces pombe (strain 972 / ATCC 24843) (Fission yeast).